The sequence spans 956 residues: Pyruvate, phosphate dikinase, chloroplastic (956 aa).

Residues 1–79 (MMSSLFVEGM…AVLNPVSPPV (79 aa)) constitute a chloroplast transit peptide. Thr-536 is modified (phosphothreonine; by PDRP1). Catalysis depends on His-538, which acts as the Tele-phosphohistidine intermediate. The substrate site is built by Arg-644, Arg-701, Glu-830, Gly-851, Thr-852, Asn-853, and Asp-854. Glu-830 contacts Mg(2+). Asp-854 contributes to the Mg(2+) binding site. Cys-916 acts as the Proton donor in catalysis.

The protein belongs to the PEP-utilizing enzyme family. Homotetramer. It depends on Mg(2+) as a cofactor. Post-translationally, phosphorylation of Thr-536 in the dark inactivates the enzyme. Dephosphorylation upon light stimulation reactivates the enzyme.

It localises to the plastid. Its subcellular location is the chloroplast. It carries out the reaction pyruvate + phosphate + ATP = phosphoenolpyruvate + AMP + diphosphate + H(+). With respect to regulation, activated by light-induced dephosphorylation. Inhibited by dark-induced phosphorylation. Both reactions are catalyzed by PDRP1. Formation of phosphoenolpyruvate. This chain is Pyruvate, phosphate dikinase, chloroplastic (PPDK), found in Flaveria pringlei.